We begin with the raw amino-acid sequence, 874 residues long: Alanine--tRNA ligase (874 aa).

Zn(2+)-binding residues include histidine 562, histidine 566, cysteine 664, and histidine 668.

Belongs to the class-II aminoacyl-tRNA synthetase family. The cofactor is Zn(2+).

It localises to the cytoplasm. It catalyses the reaction tRNA(Ala) + L-alanine + ATP = L-alanyl-tRNA(Ala) + AMP + diphosphate. Functionally, catalyzes the attachment of alanine to tRNA(Ala) in a two-step reaction: alanine is first activated by ATP to form Ala-AMP and then transferred to the acceptor end of tRNA(Ala). Also edits incorrectly charged Ser-tRNA(Ala) and Gly-tRNA(Ala) via its editing domain. In Shewanella putrefaciens (strain CN-32 / ATCC BAA-453), this protein is Alanine--tRNA ligase.